A 290-amino-acid polypeptide reads, in one-letter code: Elongation factor Ts (290 aa).

The segment at 82-85 is involved in Mg(2+) ion dislocation from EF-Tu; sequence TDFV.

This sequence belongs to the EF-Ts family.

The protein resides in the cytoplasm. Functionally, associates with the EF-Tu.GDP complex and induces the exchange of GDP to GTP. It remains bound to the aminoacyl-tRNA.EF-Tu.GTP complex up to the GTP hydrolysis stage on the ribosome. This is Elongation factor Ts from Cellvibrio japonicus (strain Ueda107) (Pseudomonas fluorescens subsp. cellulosa).